Here is an 82-residue protein sequence, read N- to C-terminus: Antitoxin MazE8 (82 aa).

Forms a complex with cognate toxin MazF8.

In terms of biological role, antitoxin component of a type II toxin-antitoxin (TA) system. Its cognate toxin is MazF8. The sequence is that of Antitoxin MazE8 (mazE8) from Mycobacterium tuberculosis (strain ATCC 25618 / H37Rv).